The following is a 335-amino-acid chain: Glyceraldehyde-3-phosphate dehydrogenase (335 aa).

NAD(+) contacts are provided by residues 10 to 11 (RI), aspartate 31, arginine 75, and threonine 122. D-glyceraldehyde 3-phosphate-binding positions include 152 to 154 (SCT) and threonine 183. Cysteine 153 functions as the Nucleophile in the catalytic mechanism. An NAD(+)-binding site is contributed by asparagine 184. Residues arginine 198, 211–212 (TG), and arginine 234 contribute to the D-glyceraldehyde 3-phosphate site. An NAD(+)-binding site is contributed by asparagine 318.

This sequence belongs to the glyceraldehyde-3-phosphate dehydrogenase family. Homotetramer.

The protein localises to the cytoplasm. The enzyme catalyses D-glyceraldehyde 3-phosphate + phosphate + NAD(+) = (2R)-3-phospho-glyceroyl phosphate + NADH + H(+). It functions in the pathway carbohydrate degradation; glycolysis; pyruvate from D-glyceraldehyde 3-phosphate: step 1/5. Its function is as follows. Catalyzes the oxidative phosphorylation of glyceraldehyde 3-phosphate (G3P) to 1,3-bisphosphoglycerate (BPG) using the cofactor NAD. The first reaction step involves the formation of a hemiacetal intermediate between G3P and a cysteine residue, and this hemiacetal intermediate is then oxidized to a thioester, with concomitant reduction of NAD to NADH. The reduced NADH is then exchanged with the second NAD, and the thioester is attacked by a nucleophilic inorganic phosphate to produce BPG. This chain is Glyceraldehyde-3-phosphate dehydrogenase (gap), found in Borreliella burgdorferi (strain ATCC 35210 / DSM 4680 / CIP 102532 / B31) (Borrelia burgdorferi).